The sequence spans 103 residues: Small ribosomal subunit protein bS18c (103 aa).

Belongs to the bacterial ribosomal protein bS18 family. As to quaternary structure, part of the 30S ribosomal subunit.

Its subcellular location is the plastid. It localises to the chloroplast. The sequence is that of Small ribosomal subunit protein bS18c from Buxus microphylla (Littleleaf boxwood).